The primary structure comprises 725 residues: 1,4-alpha-glucan branching enzyme GlgB (725 aa).

Asp406 (nucleophile) is an active-site residue. Glu459 serves as the catalytic Proton donor.

This sequence belongs to the glycosyl hydrolase 13 family. GlgB subfamily. As to quaternary structure, monomer.

The enzyme catalyses Transfers a segment of a (1-&gt;4)-alpha-D-glucan chain to a primary hydroxy group in a similar glucan chain.. The protein operates within glycan biosynthesis; glycogen biosynthesis. Its function is as follows. Catalyzes the formation of the alpha-1,6-glucosidic linkages in glycogen by scission of a 1,4-alpha-linked oligosaccharide from growing alpha-1,4-glucan chains and the subsequent attachment of the oligosaccharide to the alpha-1,6 position. The protein is 1,4-alpha-glucan branching enzyme GlgB of Methylobacillus flagellatus (strain ATCC 51484 / DSM 6875 / VKM B-1610 / KT).